We begin with the raw amino-acid sequence, 597 residues long: Elongation factor 4 (597 aa).

The region spanning 2–184 (DHIRNFSIIA…ALIAKVPPPK (183 aa)) is the tr-type G domain. Residues 14–19 (DHGKST) and 131–134 (NKID) contribute to the GTP site.

The protein belongs to the TRAFAC class translation factor GTPase superfamily. Classic translation factor GTPase family. LepA subfamily.

The protein resides in the cell inner membrane. It carries out the reaction GTP + H2O = GDP + phosphate + H(+). Required for accurate and efficient protein synthesis under certain stress conditions. May act as a fidelity factor of the translation reaction, by catalyzing a one-codon backward translocation of tRNAs on improperly translocated ribosomes. Back-translocation proceeds from a post-translocation (POST) complex to a pre-translocation (PRE) complex, thus giving elongation factor G a second chance to translocate the tRNAs correctly. Binds to ribosomes in a GTP-dependent manner. The protein is Elongation factor 4 of Cupriavidus taiwanensis (strain DSM 17343 / BCRC 17206 / CCUG 44338 / CIP 107171 / LMG 19424 / R1) (Ralstonia taiwanensis (strain LMG 19424)).